The chain runs to 219 residues: ATP-dependent dethiobiotin synthetase BioD (219 aa).

12 to 17 is an ATP binding site; the sequence is EVGKTY. Thr-16 provides a ligand contact to Mg(2+). Residue Lys-37 is part of the active site. Ser-41 serves as a coordination point for substrate. ATP contacts are provided by residues Asp-52, 114-117, and 174-175; these read EGAG and NC. Residues Asp-52 and Glu-114 each contribute to the Mg(2+) site.

Belongs to the dethiobiotin synthetase family. Homodimer. Requires Mg(2+) as cofactor.

It is found in the cytoplasm. The enzyme catalyses (7R,8S)-7,8-diammoniononanoate + CO2 + ATP = (4R,5S)-dethiobiotin + ADP + phosphate + 3 H(+). It participates in cofactor biosynthesis; biotin biosynthesis; biotin from 7,8-diaminononanoate: step 1/2. In terms of biological role, catalyzes a mechanistically unusual reaction, the ATP-dependent insertion of CO2 between the N7 and N8 nitrogen atoms of 7,8-diaminopelargonic acid (DAPA, also called 7,8-diammoniononanoate) to form a ureido ring. The polypeptide is ATP-dependent dethiobiotin synthetase BioD (Francisella tularensis subsp. holarctica (strain FTNF002-00 / FTA)).